The sequence spans 706 residues: Fatty acid oxidation complex subunit alpha (706 aa).

An enoyl-CoA hydratase region spans residues 1–188; that stretch reads MEKTFNLTRR…KMGLVNDVVP (188 aa). Residues 308-706 form a 3-hydroxyacyl-CoA dehydrogenase region; sequence RKVKKAVILG…TMAQENAHFF (399 aa).

The protein in the N-terminal section; belongs to the enoyl-CoA hydratase/isomerase family. This sequence in the central section; belongs to the 3-hydroxyacyl-CoA dehydrogenase family. In terms of assembly, heterotetramer of two alpha chains (FadJ) and two beta chains (FadI).

It localises to the cytoplasm. It catalyses the reaction a (3S)-3-hydroxyacyl-CoA = a (2E)-enoyl-CoA + H2O. The catalysed reaction is a 4-saturated-(3S)-3-hydroxyacyl-CoA = a (3E)-enoyl-CoA + H2O. It carries out the reaction a (3S)-3-hydroxyacyl-CoA + NAD(+) = a 3-oxoacyl-CoA + NADH + H(+). The enzyme catalyses (3S)-3-hydroxybutanoyl-CoA = (3R)-3-hydroxybutanoyl-CoA. Its pathway is lipid metabolism; fatty acid beta-oxidation. In terms of biological role, catalyzes the formation of a hydroxyacyl-CoA by addition of water on enoyl-CoA. Also exhibits 3-hydroxyacyl-CoA epimerase and 3-hydroxyacyl-CoA dehydrogenase activities. The protein is Fatty acid oxidation complex subunit alpha of Shewanella baltica (strain OS185).